Here is a 156-residue protein sequence, read N- to C-terminus: ATP synthase subunit b (156 aa).

The chain crosses the membrane as a helical span at residues 7 to 26 (LIGQLIAFALFVAFCMKYVW).

Belongs to the ATPase B chain family. In terms of assembly, F-type ATPases have 2 components, F(1) - the catalytic core - and F(0) - the membrane proton channel. F(1) has five subunits: alpha(3), beta(3), gamma(1), delta(1), epsilon(1). F(0) has three main subunits: a(1), b(2) and c(10-14). The alpha and beta chains form an alternating ring which encloses part of the gamma chain. F(1) is attached to F(0) by a central stalk formed by the gamma and epsilon chains, while a peripheral stalk is formed by the delta and b chains.

It localises to the cell inner membrane. F(1)F(0) ATP synthase produces ATP from ADP in the presence of a proton or sodium gradient. F-type ATPases consist of two structural domains, F(1) containing the extramembraneous catalytic core and F(0) containing the membrane proton channel, linked together by a central stalk and a peripheral stalk. During catalysis, ATP synthesis in the catalytic domain of F(1) is coupled via a rotary mechanism of the central stalk subunits to proton translocation. In terms of biological role, component of the F(0) channel, it forms part of the peripheral stalk, linking F(1) to F(0). This is ATP synthase subunit b from Haemophilus ducreyi (strain 35000HP / ATCC 700724).